Consider the following 468-residue polypeptide: Glutathione reductase (468 aa).

FAD is bound by residues Ser17 and Gly18. Ser17 lines the glutathione pocket. Residue Arg24 participates in glutathione binding. Positions 38, 45, 46, and 54 each coordinate FAD. Residues Cys46 and Cys51 are joined by a disulfide bond. Residue Tyr103 coordinates glutathione. Position 119 (Ala119) interacts with FAD. Positions 185, 188, 191, 208, 214, and 276 each coordinate NADP(+). Residue Asp317 coordinates FAD. Position 323 (Glu323) interacts with NADP(+). FAD is bound at residue Thr325. A glutathione-binding site is contributed by Arg333. NADP(+) is bound at residue Val358. Residue Lys410 participates in glutathione binding. His457 is a binding site for FAD. Residue His457 is the Proton acceptor of the active site.

This sequence belongs to the class-I pyridine nucleotide-disulfide oxidoreductase family. As to quaternary structure, homodimer. FAD is required as a cofactor.

The protein resides in the cytoplasm. The protein localises to the mitochondrion. It carries out the reaction 2 glutathione + NADP(+) = glutathione disulfide + NADPH + H(+). In terms of biological role, catalyzes the reduction of glutathione disulfide (GSSG) to reduced glutathione (GSH). Constitutes the major mechanism to maintain a high GSH:GSSG ratio in the cytosol. In Neurospora crassa (strain ATCC 24698 / 74-OR23-1A / CBS 708.71 / DSM 1257 / FGSC 987), this protein is Glutathione reductase (gtr-1).